A 239-amino-acid chain; its full sequence is Ribonuclease PH (239 aa).

Phosphate contacts are provided by residues Arg-86 and Gly-124–Arg-126.

This sequence belongs to the RNase PH family. As to quaternary structure, homohexameric ring arranged as a trimer of dimers.

It carries out the reaction tRNA(n+1) + phosphate = tRNA(n) + a ribonucleoside 5'-diphosphate. Functionally, phosphorolytic 3'-5' exoribonuclease that plays an important role in tRNA 3'-end maturation. Removes nucleotide residues following the 3'-CCA terminus of tRNAs; can also add nucleotides to the ends of RNA molecules by using nucleoside diphosphates as substrates, but this may not be physiologically important. Probably plays a role in initiation of 16S rRNA degradation (leading to ribosome degradation) during starvation. In Rickettsia bellii (strain OSU 85-389), this protein is Ribonuclease PH.